We begin with the raw amino-acid sequence, 369 residues long: Phospho-N-acetylmuramoyl-pentapeptide-transferase (369 aa).

The next 10 membrane-spanning stretches (helical) occupy residues 2–22 (IAILLAVAFGITFTLFTTPFF), 54–74 (GLVIVVASIISYFLANFFLGL), 80–100 (GLLVIFMFVGMSLVGFLDDIL), 113–133 (FYKVVLQSFIAVPFALLTFLV), 158–178 (ALFSLGIIGVFSAWILYLLWI), 195–215 (LDGLAAGAMIFTMLAYVVIGF), 241–261 (PLDMSILAAAILGSLLGFLWW), 268–288 (IMMGDTGALALGGAAAALSIL), 293–313 (LLFLVLGGLFVIEAGSVILQI), and 347–367 (FWIIAGLFTALGIGLFYADWL).

Belongs to the glycosyltransferase 4 family. MraY subfamily. Mg(2+) is required as a cofactor.

The protein resides in the cell membrane. The catalysed reaction is UDP-N-acetyl-alpha-D-muramoyl-L-alanyl-gamma-D-glutamyl-meso-2,6-diaminopimeloyl-D-alanyl-D-alanine + di-trans,octa-cis-undecaprenyl phosphate = di-trans,octa-cis-undecaprenyl diphospho-N-acetyl-alpha-D-muramoyl-L-alanyl-D-glutamyl-meso-2,6-diaminopimeloyl-D-alanyl-D-alanine + UMP. The protein operates within cell wall biogenesis; peptidoglycan biosynthesis. Catalyzes the initial step of the lipid cycle reactions in the biosynthesis of the cell wall peptidoglycan: transfers peptidoglycan precursor phospho-MurNAc-pentapeptide from UDP-MurNAc-pentapeptide onto the lipid carrier undecaprenyl phosphate, yielding undecaprenyl-pyrophosphoryl-MurNAc-pentapeptide, known as lipid I. The chain is Phospho-N-acetylmuramoyl-pentapeptide-transferase from Tropheryma whipplei (strain Twist) (Whipple's bacillus).